Here is a 559-residue protein sequence, read N- to C-terminus: uncharacterized protein (559 aa).

Helical transmembrane passes span Leu-103–Phe-123, Phe-139–Tyr-159, Ala-192–Phe-212, Phe-223–Leu-243, Trp-263–Val-283, Met-302–Ala-322, Ala-348–Asp-368, Ile-387–Ile-407, Ala-413–Ala-434, Ala-466–Asn-486, and Ile-501–Phe-521.

The protein belongs to the purine-cytosine permease (2.A.39) family.

The protein localises to the golgi apparatus membrane. This is an uncharacterized protein from Schizosaccharomyces pombe (strain 972 / ATCC 24843) (Fission yeast).